The following is a 379-amino-acid chain: Cytochrome b (379 aa).

The next 4 helical transmembrane spans lie at 33–53 (FGSL…FLAM), 77–98 (WMIR…FMHV), 113–133 (WNIG…GYVL), and 178–198 (FFAF…VHLL). The heme b site is built by histidine 83 and histidine 97. Positions 182 and 196 each coordinate heme b. Position 201 (histidine 201) interacts with a ubiquinone. 4 consecutive transmembrane segments (helical) span residues 226-246 (IKDI…VLFS), 288-308 (LGGV…PMLH), 320-340 (LSQC…WIGG), and 347-367 (FITI…XLMP).

This sequence belongs to the cytochrome b family. In terms of assembly, the cytochrome bc1 complex contains 11 subunits: 3 respiratory subunits (MT-CYB, CYC1 and UQCRFS1), 2 core proteins (UQCRC1 and UQCRC2) and 6 low-molecular weight proteins (UQCRH/QCR6, UQCRB/QCR7, UQCRQ/QCR8, UQCR10/QCR9, UQCR11/QCR10 and a cleavage product of UQCRFS1). This cytochrome bc1 complex then forms a dimer. It depends on heme b as a cofactor.

The protein resides in the mitochondrion inner membrane. Functionally, component of the ubiquinol-cytochrome c reductase complex (complex III or cytochrome b-c1 complex) that is part of the mitochondrial respiratory chain. The b-c1 complex mediates electron transfer from ubiquinol to cytochrome c. Contributes to the generation of a proton gradient across the mitochondrial membrane that is then used for ATP synthesis. The chain is Cytochrome b (MT-CYB) from Chrotogale owstoni (Owston's palm civet).